Reading from the N-terminus, the 426-residue chain is MKKISQVLNWLSSLKIAILLLLVIAVSCAAGTLIPQQESNQFYYDNFNKNPFLGIINAKILLLFEFDHVYTSFWFLFLLIWLGLALSVCSFRRQLPILKSALNWIDYKSPSQIAKLSVAQTIVTNNCAKSLEKIKLNLKKQGWNVKETDGRIAARQGVIGRLGPILIHLGMILLMIGATYGSLNGKTIEKFLAPGRSIDLLNNNEEKGLTIELQKFQIERDPQGRAEQYKSIVNVIEPNGNNQSKEISVNYPLRYKGLTLYQADWSLAAITIKIDNSPKLQIPIKPISELGEQVWGTIIPTNKDGKNQILLTVDSELGPVNIYDNDGTLLTKLIINKEEKVKGALIKIINIIPSSGLLLKHDPGVPFVYLSFAIILIGGSLSIISTKKIWVLHENEKSMIYIGGLSNRNLSGLSKELPNLISFLET.

3 helical membrane passes run 14 to 34 (LKIA…GTLI), 72 to 92 (SFWF…CSFR), and 162 to 182 (LGPI…TYGS).

It belongs to the Ccs1/CcsB family. As to quaternary structure, may interact with CcsA.

The protein localises to the cellular thylakoid membrane. In terms of biological role, required during biogenesis of c-type cytochromes (cytochrome c6 and cytochrome f) at the step of heme attachment. The chain is Cytochrome c biogenesis protein CcsB from Prochlorococcus marinus (strain NATL2A).